The following is a 708-amino-acid chain: Caprin-1 (708 aa).

Low complexity-rich tracts occupy residues 1-15 (MPSATSHSGSGSKSS) and 22-37 (GSSGNEAGAGAAAPAS). The tract at residues 1–48 (MPSATSHSGSGSKSSGPPPPSGSSGNEAGAGAAAPASQHPMTGTGAVQ) is disordered. P2 carries the N-acetylproline modification. At S10 the chain carries Phosphoserine. Residues 58–92 (VIDKKLRNLEKKKGKLDDYQERMNKGERLNQDQLD) adopt a coiled-coil conformation. Phosphoserine is present on S113. A coiled-coil region spans residues 123–151 (KTIKKTARREQLMREEAEQKRLKTVLELQ). Omega-N-methylarginine is present on R163. The interval 258 to 287 (EEAASAPTVEDQAAEAEPEPVEEYTEQNEV) is disordered. The span at 269-287 (QAAEAEPEPVEEYTEQNEV) shows a compositional bias: acidic residues. 2 positions are modified to phosphoserine: S333 and S341. Residues 358–379 (QDLMAQMQGPYNFIQDSMLDFE) form a G3BP1-binding region. Residues 415-452 (LAQPNQVSVQPEATQVPLVSSTSEGYTASQPLYQPSHA) show a composition bias toward polar residues. Disordered regions lie at residues 415-459 (LAQP…RPQK), 473-497 (TDQTTASSSLPAASQPQVFQAGTSK), 521-559 (NAPVPPVNEPETLKQQNQYQASYNQSFSSQPHQVEQTEL), and 571-708 (YHGS…QQVN). Composition is skewed to low complexity over residues 475 to 489 (QTTASSSLPAASQPQ) and 535 to 559 (QQNQYQASYNQSFSSQPHQVEQTEL). Polar residues predominate over residues 572 to 603 (HGSQDQPHQVTGNHQQPPQQNTGFPRSNQPYY). Y623 is subject to Phosphotyrosine. An omega-N-methylarginine mark is found at R624 and R631. Phosphotyrosine is present on residues Y634 and Y637. At R638 the chain carries Omega-N-methylarginine. The segment covering 640 to 656 (SFSTNTPNSGYTQSQFS) has biased composition (polar residues). S642 and S648 each carry an O-linked (GlcNAc) serine glycan. Phosphotyrosine occurs at positions 650, 661, 664, and 669. Composition is skewed to low complexity over residues 675 to 685 (RGSGQSGPRGA) and 696 to 708 (NRGMPQMNTQQVN). The residue at position 697 (R697) is an Asymmetric dimethylarginine; alternate. R697 carries the omega-N-methylarginine; alternate modification.

It belongs to the caprin family. May form homomultimers. Interacts with G3BP1; interaction is direct and promotes stress granule formation. Interacts with G3BP2; interaction is direct and promotes stress granule formation. Interacts with PQBP1. Interacts with DDX3X. Interacts (when phosphorylated by EPHA4) with FMR1; interaction with FMR1 promotes formation of a membraneless compartment. Post-translationally, tyrosine phosphorylation by EPHA4 promotes interaction with FMR1 and liquid-liquid phase separation (LLPS) for the formation of a membraneless compartment that concentrates mRNAs with associated regulatory factors. O-glycosylated (O-GlcNAcylated), in a cell cycle-dependent manner. O-glycosylation by OGT inhibit ability to undergo liquid-liquid phase separation (LLPS).

It is found in the cytoplasm. Its subcellular location is the cytoplasmic ribonucleoprotein granule. It localises to the cytosol. The protein resides in the cell projection. The protein localises to the dendrite. It is found in the lamellipodium. Its activity is regulated as follows. Ability to mediate liquid-liquid phase separation is regulated by ATP: moderate concentrations of ATP enhance phase separation, whereas high concentrations of ATP lead to inhibition of phase separation. MRNA-binding protein that acts as a regulator of mRNAs transport, translation and/or stability, and which is involved in neurogenesis, synaptic plasticity in neurons and cell proliferation and migration in multiple cell types. Plays an essential role in cytoplasmic stress granule formation. Acts as an mRNA regulator by mediating formation of some phase-separated membraneless compartment: undergoes liquid-liquid phase separation upon binding to target mRNAs, leading to assemble mRNAs into cytoplasmic ribonucleoprotein granules that concentrate mRNAs with associated regulatory factors. Undergoes liquid-liquid phase separation following phosphorylation and interaction with FMR1, promoting formation of cytoplasmic ribonucleoprotein granules that concentrate mRNAs with factors that inhibit translation and mediate deadenylation of target mRNAs. In these cytoplasmic ribonucleoprotein granules, CAPRIN1 mediates recruitment of CNOT7 deadenylase, leading to mRNA deadenylation and degradation. Binds directly and selectively to MYC and CCND2 mRNAs. In neuronal cells, directly binds to several mRNAs associated with RNA granules, including BDNF, CAMK2A, CREB1, MAP2, NTRK2 mRNAs, as well as to GRIN1 and KPNB1 mRNAs, but not to rRNAs. This Bos taurus (Bovine) protein is Caprin-1 (CAPRIN1).